Reading from the N-terminus, the 1032-residue chain is Importin beta-like protein KAP120 (1032 aa).

Alanine 2 is modified (N-acetylalanine). Residues 31–103 (AEQQLRQWET…RGRLFEMIDE (73 aa)) enclose the Importin N-terminal domain.

Belongs to the importin beta family. Interacts with GTP-bound GSP1 and RFP1. Associates with the nuclear pore complex.

Its subcellular location is the cytoplasm. It is found in the nucleus. In terms of biological role, functions in nuclear protein import as nuclear transport receptor. Serves as receptor for nuclear localization signals (NLS) in cargo substrates. Thought to mediate docking of the importin/substrate complex to the nuclear pore complex (NPC) through binding to nucleoporin and the complex is subsequently translocated through the pore by an energy requiring, RAN-dependent mechanism. Required for nuclear import of Ho endonuclease and RFP1, and involved in rRNA-processing and assembly or export of 60S ribosomal subunits. The sequence is that of Importin beta-like protein KAP120 (KAP120) from Saccharomyces cerevisiae (strain ATCC 204508 / S288c) (Baker's yeast).